We begin with the raw amino-acid sequence, 290 residues long: Acetylglutamate kinase (290 aa).

Substrate contacts are provided by residues 65 to 66 (GG), Arg-87, and Asn-186.

Belongs to the acetylglutamate kinase family. ArgB subfamily.

The protein localises to the cytoplasm. The enzyme catalyses N-acetyl-L-glutamate + ATP = N-acetyl-L-glutamyl 5-phosphate + ADP. The protein operates within amino-acid biosynthesis; L-arginine biosynthesis; N(2)-acetyl-L-ornithine from L-glutamate: step 2/4. In terms of biological role, catalyzes the ATP-dependent phosphorylation of N-acetyl-L-glutamate. In Mycolicibacterium gilvum (strain PYR-GCK) (Mycobacterium gilvum (strain PYR-GCK)), this protein is Acetylglutamate kinase.